We begin with the raw amino-acid sequence, 625 residues long: Folylpolyglutamate synthase (625 aa).

An ATP-binding site is contributed by 141 to 144 (GKGS). Residues Ser-165, Glu-234, and His-262 each contribute to the Mg(2+) site. Residues Arg-384 and Asp-414 each coordinate ATP.

This sequence belongs to the folylpolyglutamate synthase family. A monovalent cation serves as cofactor.

It is found in the mitochondrion inner membrane. The protein localises to the mitochondrion matrix. It catalyses the reaction (6S)-5,6,7,8-tetrahydrofolyl-(gamma-L-Glu)(n) + L-glutamate + ATP = (6S)-5,6,7,8-tetrahydrofolyl-(gamma-L-Glu)(n+1) + ADP + phosphate + H(+). Its pathway is cofactor biosynthesis; tetrahydrofolylpolyglutamate biosynthesis. Catalyzes conversion of folates to polyglutamate derivatives allowing concentration of folate compounds in the cell and the intracellular retention of these cofactors, which are important substrates for most of the folate-dependent enzymes that are involved in one-carbon transfer reactions involved in purine, pyrimidine and amino acid synthesis. Essential for organellar and whole-plant folate homeostasis. This chain is Folylpolyglutamate synthase, found in Arabidopsis thaliana (Mouse-ear cress).